The chain runs to 185 residues: Putative manganese efflux pump MntP (185 aa).

The next 6 membrane-spanning stretches (helical) occupy residues 4–24, 43–63, 67–87, 107–127, 131–151, and 165–185; these read LLLSSLVIAVGLAMDSFSVSL, IFFGFFQFAMPLLGWGIGVPI, IDPFGYWIVVGLFFFIGGKMI, LLLAVATSIDALAVGISFALI, VLLPAVIIGVVAFLFSFFGVL, and QILGGVILVLIGIKFLIEYCL.

Belongs to the MntP (TC 9.B.29) family.

The protein localises to the cell membrane. Functionally, probably functions as a manganese efflux pump. This chain is Putative manganese efflux pump MntP, found in Methanocorpusculum labreanum (strain ATCC 43576 / DSM 4855 / Z).